We begin with the raw amino-acid sequence, 271 residues long: Cytosolic Fe-S cluster assembly factor NUBP2 (271 aa).

M1 is subject to N-acetylmethionine. 22 to 29 contacts ATP; sequence GKGGVGKS. [4Fe-4S] cluster contacts are provided by C196 and C199.

It belongs to the Mrp/NBP35 ATP-binding proteins family. NUBP2/CFD1 subfamily. As to quaternary structure, heterotetramer of 2 NUBP1 and 2 NUBP2 chains. Interacts with KIFC1. Interacts with NUBP1. It depends on [4Fe-4S] cluster as a cofactor. In terms of tissue distribution, widely expressed with highest expression in skeletal muscle.

The protein resides in the nucleus. It localises to the cytoplasm. It is found in the cytoskeleton. Its subcellular location is the microtubule organizing center. The protein localises to the centrosome. The protein resides in the cilium axoneme. It localises to the centriole. Its function is as follows. Component of the cytosolic iron-sulfur (Fe/S) protein assembly (CIA) machinery. Required for maturation of extramitochondrial Fe-S proteins. The NUBP1-NUBP2 heterotetramer forms a Fe-S scaffold complex, mediating the de novo assembly of an Fe-S cluster and its transfer to target apoproteins. Negatively regulates cilium formation and structure. The chain is Cytosolic Fe-S cluster assembly factor NUBP2 from Homo sapiens (Human).